Consider the following 91-residue polypeptide: Bombyxin C-1 (91 aa).

The N-terminal stretch at 1–19 is a signal peptide; the sequence is MKLVMLLVVVSAMLVLGGA. Gln20 is modified (pyrrolidone carboxylic acid). 3 cysteine pairs are disulfide-bonded: Cys27–Cys76, Cys39–Cys89, and Cys75–Cys80. Positions 47–67 are cleaved as a propeptide — c peptide like; it reads SGSQYAGYGWPWLPPFSSSRG.

It belongs to the insulin family. As to quaternary structure, heterodimer of a B chain and an A chain linked by two disulfide bonds.

The protein resides in the secreted. Functionally, brain peptide responsible for activation of prothoracic glands to produce ecdysone in insects. The polypeptide is Bombyxin C-1 (BBXC1) (Bombyx mori (Silk moth)).